A 405-amino-acid chain; its full sequence is Magnesium-protoporphyrin IX monomethyl ester [oxidative] cyclase, chloroplastic (405 aa).

A chloroplast-targeting transit peptide spans 1 to 44 (MAAEMALVKPITPKFINPMRTFSSSSKFSTIKMSATSQSNTTTT). A compositionally biased stretch (low complexity) spans 33–47 (MSATSQSNTTTTATK). The disordered stretch occupies residues 33–54 (MSATSQSNTTTTATKPSKKGNK).

Belongs to the AcsF family. Requires Fe cation as cofactor.

The protein resides in the plastid. Its subcellular location is the chloroplast. It carries out the reaction Mg-protoporphyrin IX 13-monomethyl ester + 3 NADPH + 3 O2 + 2 H(+) = 3,8-divinyl protochlorophyllide a + 3 NADP(+) + 5 H2O. The protein operates within porphyrin-containing compound metabolism; chlorophyll biosynthesis. Catalyzes the formation of the isocyclic ring in chlorophyll biosynthesis. Mediates the cyclase reaction, which results in the formation of divinylprotochlorophyllide (Pchlide) characteristic of all chlorophylls from magnesium-protoporphyrin IX 13-monomethyl ester (MgPMME). In Euphorbia esula (Leafy spurge), this protein is Magnesium-protoporphyrin IX monomethyl ester [oxidative] cyclase, chloroplastic (CRD1).